The primary structure comprises 131 residues: RxLR effector protein 62 (131 aa).

A signal peptide spans 1–19 (MRLDILLFTLSSSTSLALS). The short motif at 49-60 (RHLREEPANEAR) is the RxLR-dEER element. N-linked (GlcNAc...) asparagine glycosylation occurs at N61.

It belongs to the RxLR effector family.

It localises to the secreted. The protein resides in the host cell. In terms of biological role, secreted effector that suppresses callose deposition, a hallmark of pathogen-associated molecular pattern (PAMP)-triggered immunity (PTI) and renders host plants more susceptible to bacterial infection. Reduces host plant responsiveness to salicylic acid (SA) in haustoriated cells into which host-translocated effectors are delivered. The protein is RxLR effector protein 62 of Hyaloperonospora arabidopsidis (strain Emoy2) (Downy mildew agent).